Here is a 301-residue protein sequence, read N- to C-terminus: GPN-loop GTPase 3 (301 aa).

Position 13–18 (Gly13–Thr18) interacts with GTP. The Gly-Pro-Asn (GPN)-loop; involved in dimer interface motif lies at Gly70 to Asn72. Residue Ser176–Asp179 coordinates GTP. Residues Ile212–Val232 are disordered. Residues Ser223–Val232 show a composition bias toward basic and acidic residues.

Belongs to the GPN-loop GTPase family. As to quaternary structure, heterodimers with GPN1 or GPN2. Binds to RNA polymerase II (RNAPII).

In terms of biological role, small GTPase required for proper nuclear import of RNA polymerase II and III (RNAPII and RNAPIII). May act at an RNAP assembly step prior to nuclear import. This is GPN-loop GTPase 3 from Gibberella zeae (strain ATCC MYA-4620 / CBS 123657 / FGSC 9075 / NRRL 31084 / PH-1) (Wheat head blight fungus).